A 564-amino-acid chain; its full sequence is Interactor of constitutive active ROPs 3 (564 aa).

Disordered stretches follow at residues 1–73 (MQTQ…SRIT) and 88–135 (KAKD…SALE). A compositionally biased stretch (polar residues) spans 33–44 (ESSSSPISATNR). Basic and acidic residues-rich tracts occupy residues 63–73 (VSEKKRPSRIT) and 98–123 (TSKK…KLEE). 2 coiled-coil regions span residues 70–133 (SRIT…ETSA) and 231–514 (AETE…AATA). Ser533 carries the phosphoserine modification.

The protein belongs to the ICR family. In terms of assembly, interacts with ARAC11 in vitro. In terms of tissue distribution, expressed in flowers.

Functionally, acts as a scaffold, mediating interaction of ROPs with different proteins. The protein is Interactor of constitutive active ROPs 3 (ICR3) of Arabidopsis thaliana (Mouse-ear cress).